The sequence spans 192 residues: NADH-quinone oxidoreductase subunit C (192 aa).

Residues 170–192 (LGGIPVEYKGATVPPPDERRQYA) form a disordered region.

It belongs to the complex I 30 kDa subunit family. As to quaternary structure, NDH-1 is composed of 14 different subunits. Subunits NuoB, C, D, E, F, and G constitute the peripheral sector of the complex.

The protein localises to the cell membrane. The enzyme catalyses a quinone + NADH + 5 H(+)(in) = a quinol + NAD(+) + 4 H(+)(out). Its function is as follows. NDH-1 shuttles electrons from NADH, via FMN and iron-sulfur (Fe-S) centers, to quinones in the respiratory chain. The immediate electron acceptor for the enzyme in this species is believed to be a menaquinone. Couples the redox reaction to proton translocation (for every two electrons transferred, four hydrogen ions are translocated across the cytoplasmic membrane), and thus conserves the redox energy in a proton gradient. In Acidothermus cellulolyticus (strain ATCC 43068 / DSM 8971 / 11B), this protein is NADH-quinone oxidoreductase subunit C.